Here is a 144-residue protein sequence, read N- to C-terminus: Methylglyoxal synthase (144 aa).

An MGS-like domain is found at 1-144; the sequence is MNIALIAHDE…EEEQRKFLTD (144 aa). Substrate-binding positions include His8, Lys12, 34 to 37, and 54 to 55; these read TGTT and SG. Asp60 acts as the Proton donor/acceptor in catalysis. His87 serves as a coordination point for substrate.

This sequence belongs to the methylglyoxal synthase family.

The catalysed reaction is dihydroxyacetone phosphate = methylglyoxal + phosphate. Its function is as follows. Catalyzes the formation of methylglyoxal from dihydroxyacetone phosphate. The protein is Methylglyoxal synthase of Exiguobacterium sibiricum (strain DSM 17290 / CCUG 55495 / CIP 109462 / JCM 13490 / 255-15).